Here is a 441-residue protein sequence, read N- to C-terminus: Nucleoprotein (441 aa).

The interval 1 to 56 is disordered; that stretch reads MSYTPGHHAGSRSSSGNRSGILKKTSWVDQSERSHQTYNRGRKPQPKFTVSTQPQG. The span at 11 to 20 shows a compositional bias: low complexity; that stretch reads SRSSSGNRSG. The tract at residues 53-193 is RNA-binding; sequence QPQGNPIPHY…GYYVEGSGRS (141 aa). Positions 60-189 constitute a CoV N NTD domain; that stretch reads PHYSWFSGIT…ILPQGYYVEG (130 aa). Residues Arg-105 and Arg-121 each contribute to the RNA site. Ser-158 is modified (phosphoserine; by host). Arg-163 serves as a coordination point for RNA. Thr-173 is modified (phosphothreonine; by host). Positions 186-226 are disordered; the sequence is YVEGSGRSASNSRPGSRSQSRGPNNRSLSRSNSNFRHSDSI. Residues 189–220 show a composition bias toward low complexity; sequence GSGRSASNSRPGSRSQSRGPNNRSLSRSNSNF. Residue Ser-190 is modified to Phosphoserine; by host. The region spanning 257–379 is the CoV N CTD domain; it reads AKEIRHKILM…ENLDAYVNSN (123 aa). A dimerization region spans residues 264-382; it reads ILMKPRQKRT…DAYVNSNQNT (119 aa). Polar residues predominate over residues 380-389; sequence QNTVSGSLSP. Residues 380-408 form a disordered region; sequence QNTVSGSLSPKPQRKRGVKQSPESFDSLN. Phosphoserine; by host occurs at positions 388 and 417. At Thr-421 the chain carries Phosphothreonine; by host.

This sequence belongs to the betacoronavirus nucleocapsid protein family. Homooligomer. Both monomeric and oligomeric forms interact with RNA. Interacts with protein M. Interacts with NSP3; this interaction serves to tether the genome to the newly translated replicase-transcriptase complex at a very early stage of infection. ADP-ribosylated. The ADP-ribosylation is retained in the virion during infection. In terms of processing, phosphorylated on serine and threonine residues.

Its subcellular location is the virion. The protein localises to the host endoplasmic reticulum-Golgi intermediate compartment. It localises to the host Golgi apparatus. Packages the positive strand viral genome RNA into a helical ribonucleocapsid (RNP) and plays a fundamental role during virion assembly through its interactions with the viral genome and membrane protein M. Plays an important role in enhancing the efficiency of subgenomic viral RNA transcription as well as viral replication. The polypeptide is Nucleoprotein (Homo sapiens (Human)).